The sequence spans 140 residues: RxLR effector protein Avh23 (140 aa).

The signal sequence occupies residues 1 to 21; the sequence is MRLTYFLTVIVVATLHAGGTA. A RxLR-dEER motif is present at residues 54 to 72; that stretch reads RMLRKVKEDTVSKKDHEER. An ADA2-binding IR1 repeat occupies 100–113; it reads QGAFQRQNAFVNRD. The stretch at 114–127 is one ADA2-binding IR2 repeat; sequence QGAFQRQNAFVKRA.

This sequence belongs to the RxLR effector family. As to quaternary structure, interacts with host histone acetyl transferase SAGA complex subunit ADA2.

It localises to the secreted. It is found in the host nucleus. The protein resides in the host cytoplasm. Effector that suppresses plant defense responses during the early stages of pathogen infection. Suppresses cell death induced by effectors and PAMPs in plant hosts. Acts as a modulator of histone acetyltransferase (HAT) in plants. Avh23 binds to the ADA2 subunit of the HAT complex SAGA and disrupts its assembly by interfering with the association of ADA2 with the catalytic subunit GCN5. As such, Avh23 suppresses H3K9 acetylation mediated by the ADA2/GCN5 module and increases plant susceptibility. The chain is RxLR effector protein Avh23 from Phytophthora sojae (Soybean stem and root rot agent).